A 311-amino-acid chain; its full sequence is Lipoyl synthase (311 aa).

7 residues coordinate [4Fe-4S] cluster: C36, C41, C47, C66, C70, C73, and S280. One can recognise a Radical SAM core domain in the interval 51–269 (RDGPGTATFM…RVAESEFGFL (219 aa)).

Belongs to the radical SAM superfamily. Lipoyl synthase family. [4Fe-4S] cluster is required as a cofactor.

It is found in the cytoplasm. It catalyses the reaction [[Fe-S] cluster scaffold protein carrying a second [4Fe-4S](2+) cluster] + N(6)-octanoyl-L-lysyl-[protein] + 2 oxidized [2Fe-2S]-[ferredoxin] + 2 S-adenosyl-L-methionine + 4 H(+) = [[Fe-S] cluster scaffold protein] + N(6)-[(R)-dihydrolipoyl]-L-lysyl-[protein] + 4 Fe(3+) + 2 hydrogen sulfide + 2 5'-deoxyadenosine + 2 L-methionine + 2 reduced [2Fe-2S]-[ferredoxin]. Its pathway is protein modification; protein lipoylation via endogenous pathway; protein N(6)-(lipoyl)lysine from octanoyl-[acyl-carrier-protein]: step 2/2. Catalyzes the radical-mediated insertion of two sulfur atoms into the C-6 and C-8 positions of the octanoyl moiety bound to the lipoyl domains of lipoate-dependent enzymes, thereby converting the octanoylated domains into lipoylated derivatives. The sequence is that of Lipoyl synthase from Halobacterium salinarum (strain ATCC 29341 / DSM 671 / R1).